Reading from the N-terminus, the 43-residue chain is Potassium channel toxin gamma-KTx 4.4 (43 aa).

4 disulfides stabilise this stretch: cysteine 5-cysteine 23, cysteine 11-cysteine 34, cysteine 20-cysteine 39, and cysteine 24-cysteine 41.

Belongs to the ergtoxin family. Gamma-KTx 4 subfamily. Expressed by the venom gland.

Its subcellular location is the secreted. Its function is as follows. Reversibly blocks Kv11/ERG potassium channels. The polypeptide is Potassium channel toxin gamma-KTx 4.4 (Centruroides exilicauda (Bark scorpion)).